A 276-amino-acid polypeptide reads, in one-letter code: Type II pantothenate kinase (276 aa).

8-15 (DAGGTLTK) contributes to the ATP binding site. Residue Glu76 is the Proton acceptor of the active site. ATP is bound by residues Thr105, 127 to 131 (GGTIM), Phe143, and Ser230.

The protein belongs to the type II pantothenate kinase family. Homodimer.

The protein localises to the cytoplasm. The catalysed reaction is (R)-pantothenate + ATP = (R)-4'-phosphopantothenate + ADP + H(+). It functions in the pathway cofactor biosynthesis; coenzyme A biosynthesis; CoA from (R)-pantothenate: step 1/5. Catalyzes the phosphorylation of pantothenate (Pan), the first step in CoA biosynthesis. This chain is Type II pantothenate kinase, found in Bacillus anthracis.